A 317-amino-acid polypeptide reads, in one-letter code: Transaldolase (317 aa).

K126 (schiff-base intermediate with substrate) is an active-site residue.

This sequence belongs to the transaldolase family. Type 1 subfamily. As to quaternary structure, homodimer.

The protein localises to the cytoplasm. The enzyme catalyses D-sedoheptulose 7-phosphate + D-glyceraldehyde 3-phosphate = D-erythrose 4-phosphate + beta-D-fructose 6-phosphate. It functions in the pathway carbohydrate degradation; pentose phosphate pathway; D-glyceraldehyde 3-phosphate and beta-D-fructose 6-phosphate from D-ribose 5-phosphate and D-xylulose 5-phosphate (non-oxidative stage): step 2/3. Its function is as follows. Transaldolase is important for the balance of metabolites in the pentose-phosphate pathway. The protein is Transaldolase of Burkholderia cenocepacia (strain ATCC BAA-245 / DSM 16553 / LMG 16656 / NCTC 13227 / J2315 / CF5610) (Burkholderia cepacia (strain J2315)).